The sequence spans 285 residues: MTNKVQILSVTALGNLDAYIRIANLWPMLSIKEEKLLTKRLRYHDDLDAAKTLILSHLRFVIHISRNYSGYGLLQADLIQEGNIGLMKAVRRFNPDIGVRLVSFAVHWIKSEIHEYVLRNWRIVKVATTKSQRKLFFNLRKNKKRLGWFNQEEIEIVARELGVSSEDVREMESRMSAQDITFNPFPEEDLKDGKINGNMFYLQDKTSNFANGLEQDNWNKHTTSKLSNALLRLDERSRNIIRARWLDKKEKNTLQKIANNYGISAERVRQLEKNAMKKLKIAIEN.

Residues Leu53–Arg122 form a sigma-70 factor domain-2 region. The Interaction with polymerase core subunit RpoC motif lies at Asp77–Gln80. The sigma-70 factor domain-4 stretch occupies residues Ala229–Ile281. The segment at residues Leu254–Lys273 is a DNA-binding region (H-T-H motif).

It belongs to the sigma-70 factor family. RpoH subfamily. In terms of assembly, interacts with the RNA polymerase core enzyme.

The protein resides in the cytoplasm. In terms of biological role, sigma factors are initiation factors that promote the attachment of RNA polymerase to specific initiation sites and are then released. This sigma factor is involved in regulation of expression of heat shock genes. This is RNA polymerase sigma factor RpoH from Buchnera aphidicola subsp. Schizaphis graminum (strain Sg).